We begin with the raw amino-acid sequence, 99 residues long: Large ribosomal subunit protein uL23 (99 aa).

This sequence belongs to the universal ribosomal protein uL23 family. Part of the 50S ribosomal subunit. Contacts protein L29, and trigger factor when it is bound to the ribosome.

Its function is as follows. One of the early assembly proteins it binds 23S rRNA. One of the proteins that surrounds the polypeptide exit tunnel on the outside of the ribosome. Forms the main docking site for trigger factor binding to the ribosome. The polypeptide is Large ribosomal subunit protein uL23 (Shewanella woodyi (strain ATCC 51908 / MS32)).